Reading from the N-terminus, the 280-residue chain is MSTLHKFKAYFGMVPLEDYEDDYVDDRAPRASERGGARGPRPYSERAGYGADRYGEDRYSADRFGPERFGAERFGPDRFGADRFDEDADYPEPAYKSYKSGYPVARRDDYPEDAYGEDRYEAPRRPTRIDAAPSSGRFRAGGGAPMLRGATRGALAVDPEAEERRLEERMRPEPVVARRPGIFEDGGPLSKITTLRPRDYSEARIIGERFREGNPVIMDLVELSNADAKRLVDFAAGLAFALRGSFDKVATKVFLLSPADVDVSAEERRRIAETGFYNQK.

Residues 22-117 (DYVDDRAPRA…DDYPEDAYGE (96 aa)) are disordered. Composition is skewed to basic and acidic residues over residues 25–36 (DDRAPRASERGG) and 53–83 (RYGE…GADR).

This sequence belongs to the SepF family. As to quaternary structure, homodimer. Interacts with FtsZ.

Its subcellular location is the cytoplasm. Functionally, cell division protein that is part of the divisome complex and is recruited early to the Z-ring. Probably stimulates Z-ring formation, perhaps through the cross-linking of FtsZ protofilaments. Its function overlaps with FtsA. This Nocardia farcinica (strain IFM 10152) protein is Cell division protein SepF.